A 604-amino-acid chain; its full sequence is UvrABC system protein C (604 aa).

Residues 13–92 (ASPGVYLMKD…IKKYHPKYNV (80 aa)) enclose the GIY-YIG domain. Positions 205–240 (SEIVQDLEKSIEKASKEQKFEQAGMYYRTLKLIQQA) constitute a UVR domain.

Belongs to the UvrC family. In terms of assembly, interacts with UvrB in an incision complex.

It localises to the cytoplasm. Functionally, the UvrABC repair system catalyzes the recognition and processing of DNA lesions. UvrC both incises the 5' and 3' sides of the lesion. The N-terminal half is responsible for the 3' incision and the C-terminal half is responsible for the 5' incision. This Chlamydia abortus (strain DSM 27085 / S26/3) (Chlamydophila abortus) protein is UvrABC system protein C.